A 59-amino-acid chain; its full sequence is UPF0434 protein Mmc1_0910 (59 aa).

The protein belongs to the UPF0434 family.

The protein is UPF0434 protein Mmc1_0910 of Magnetococcus marinus (strain ATCC BAA-1437 / JCM 17883 / MC-1).